Reading from the N-terminus, the 204-residue chain is Kunitz type trypsin inhibitor 106 (204 aa).

A signal peptide spans 1 to 26 (MSMRLSIRTLIILAHVCLFITTTTIA). An N-linked (GlcNAc...) asparagine glycan is attached at Asn-62. A disulfide bond links Cys-65 and Cys-112. Asn-141 carries N-linked (GlcNAc...) asparagine glycosylation. 2 cysteine pairs are disulfide-bonded: Cys-164–Cys-176 and Cys-169–Cys-172.

This sequence belongs to the protease inhibitor I3 (leguminous Kunitz-type inhibitor) family. As to quaternary structure, interacts with SCP1 and CP. In terms of tissue distribution, expressed at low levels in non-mycorrhizal roots.

It is found in the secreted. The protein localises to the extracellular space. The protein resides in the apoplast. In terms of biological role, protease inhibitor that, together with SCP1, controls mycorrhiza establishment and arbuscule development during root colonization by arbuscular mycorrhizal (AM) fungi (e.g. Rhizophagus irregularis), probably by degrading SCP1 in the apoplast of the periarbuscular region. In Medicago truncatula (Barrel medic), this protein is Kunitz type trypsin inhibitor 106.